The chain runs to 299 residues: Serpentine receptor class gamma-30 (299 aa).

A run of 7 helical transmembrane segments spans residues 18-38 (GIQFVYFIVGLGFHFAVIKVL), 59-79 (ILSVLIILLDLVLIRVFNYIP), 98-118 (ILFIEQYLQFVKSLIFCFMVV), 137-157 (IIPHVIVFCILCPLLGVWTAF), 189-209 (IISSITIVTVCICSVISMLCI), 223-243 (LTASALAMSIFYVFALSMNIY), and 260-280 (ALTAFAFDIILVCPPVIMLCL).

It belongs to the nematode receptor-like protein srg family.

The protein resides in the membrane. The chain is Serpentine receptor class gamma-30 (srg-30) from Caenorhabditis elegans.